The primary structure comprises 105 residues: Large ribosomal subunit protein bL21 (105 aa).

This sequence belongs to the bacterial ribosomal protein bL21 family. Part of the 50S ribosomal subunit. Contacts protein L20.

Functionally, this protein binds to 23S rRNA in the presence of protein L20. This Dictyoglomus turgidum (strain DSM 6724 / Z-1310) protein is Large ribosomal subunit protein bL21.